A 425-amino-acid polypeptide reads, in one-letter code: Putative integrase/recombinase y4rF (425 aa).

Residues 123–210 (DPDALLLASF…HIRTFLRFLC (88 aa)) enclose the Core-binding (CB) domain. One can recognise a Tyr recombinase domain in the interval 233–418 (HLPPRLAWGD…AASQLAEVAL (186 aa)). Catalysis depends on residues arginine 273, lysine 298, histidine 370, arginine 373, and histidine 396. The active-site O-(3'-phospho-DNA)-tyrosine intermediate is the tyrosine 405.

The protein belongs to the 'phage' integrase family.

This Sinorhizobium fredii (strain NBRC 101917 / NGR234) protein is Putative integrase/recombinase y4rF.